The following is a 1592-amino-acid chain: Probable serine/threonine-protein kinase DDB_G0293958 (1592 aa).

The Protein kinase 1 domain occupies 1 to 302 (MTGFEIFKKK…CLNYLKEKLI (302 aa)). Residues 2-10 (TGFEIFKKK) and lysine 43 contribute to the ATP site. Aspartate 158 functions as the Proton acceptor in the catalytic mechanism. Disordered stretches follow at residues 348 to 402 (INNN…NNNN), 455 to 526 (FNDI…SNYN), and 837 to 867 (KNNNNFYNNNNNNNNNNNNNNNNNNNSNDKS). Positions 349-402 (NNNNNNNNNNNNNNNNNNNNNNNNNNNNNNNNNNNNNNNNNNNNNNNNNNNNNN) are enriched in low complexity. The stretch at 461-518 (STTGEEEEEEKKDNLKRQNENNQIEQEDKGEKHLKETLNNNNNNNNNNNNNNNNNNNN) forms a coiled coil. The segment covering 486–496 (QEDKGEKHLKE) has biased composition (basic and acidic residues). 2 stretches are compositionally biased toward low complexity: residues 499–526 (NNNNNNNNNNNNNNNNNNNNNNNNSNYN) and 837–864 (KNNNNFYNNNNNNNNNNNNNNNNNNNSN). Residues 1342-1592 (LGTYNLIGDS…KELIECLNKL (251 aa)) form the Protein kinase 2 domain. Residues 1348–1356 (IGDSVFRNI) and lysine 1376 each bind ATP. Aspartate 1474 functions as the Proton acceptor in the catalytic mechanism.

The protein belongs to the protein kinase superfamily. Ser/Thr protein kinase family.

The enzyme catalyses L-seryl-[protein] + ATP = O-phospho-L-seryl-[protein] + ADP + H(+). It carries out the reaction L-threonyl-[protein] + ATP = O-phospho-L-threonyl-[protein] + ADP + H(+). In Dictyostelium discoideum (Social amoeba), this protein is Probable serine/threonine-protein kinase DDB_G0293958.